The following is a 302-amino-acid chain: Bacteriochlorophyll synthase 33 kDa chain (302 aa).

Helical transmembrane passes span 25–45, 49–69, 97–117, 119–139, 145–165, 166–186, 223–243, 246–266, and 275–295; these read ITWF…GIWP, WPLV…MSQA, WGLY…WMLG, WGFG…VEPI, GWWG…FTGA, AVLS…LYAF, LACT…VIWG, IHAG…RVLL, and WYNG…AFAI.

It localises to the cell membrane. It functions in the pathway porphyrin-containing compound metabolism; bacteriochlorophyll biosynthesis (light-independent). Functionally, catalyzes the esterification of bacteriochlorophyllide a by geranylgeraniol-PPi. This chain is Bacteriochlorophyll synthase 33 kDa chain (bchG), found in Cereibacter sphaeroides (strain ATCC 17023 / DSM 158 / JCM 6121 / CCUG 31486 / LMG 2827 / NBRC 12203 / NCIMB 8253 / ATH 2.4.1.) (Rhodobacter sphaeroides).